A 296-amino-acid polypeptide reads, in one-letter code: Homeobox protein SIX2 (296 aa).

Positions glycine 124–glutamate 183 form a DNA-binding region, homeobox. The segment at valine 168–leucine 284 is disordered. Basic and acidic residues predominate over residues aspartate 179–serine 190. Composition is skewed to low complexity over residues glutamate 191–asparagine 206 and histidine 228–leucine 237. A compositionally biased stretch (pro residues) spans proline 254–valine 264.

It belongs to the SIX/Sine oculis homeobox family. In terms of assembly, interacts with TCF7L2; in a canonical Wnt signaling independent manner; prevents transcription of differentiation genes in cap mesenchyme. Interacts with OSR1; form a strong repressor complex with TCF7L2, TLE2 and TLE3 to prevent the activation of Wnt/beta-catenin target genes in the cap mesenchyme. Interacts with HOXA11, EYA1 and EYA3. In terms of tissue distribution, expressed in phalangeal tendons, in smooth muscle and in head and body mesenchyme.

It localises to the nucleus. In terms of biological role, transcription factor that plays an important role in the development of several organs, including kidney, skull and stomach. During kidney development, maintains cap mesenchyme multipotent nephron progenitor cells in an undifferentiated state by opposing the inductive signals emanating from the ureteric bud and cooperates with WNT9B to promote renewing progenitor cells proliferation. Acts through its interaction with TCF7L2 and OSR1 in a canonical Wnt signaling independent manner preventing transcription of differentiation genes in cap mesenchyme such as WNT4. Also acts independently of OSR1 to activate expression of many cap mesenchyme genes, including itself, GDNF and OSR1. During craniofacial development plays a role in growth and elongation of the cranial base through regulation of chondrocyte differentiation. During stomach organogenesis, controls pyloric sphincter formation and mucosal growth through regulation of a gene network including NKX2-5, BMPR1B, BMP4, SOX9 and GREM1. During branchial arch development, acts to mediate HOXA2 control over the insulin-like growth factor pathway. May also be involved in limb tendon and ligament development. Plays a role in cell proliferation and migration. The chain is Homeobox protein SIX2 (Six2) from Mus musculus (Mouse).